A 167-amino-acid chain; its full sequence is Large ribosomal subunit protein uL10 (167 aa).

The protein belongs to the universal ribosomal protein uL10 family. As to quaternary structure, part of the ribosomal stalk of the 50S ribosomal subunit. The N-terminus interacts with L11 and the large rRNA to form the base of the stalk. The C-terminus forms an elongated spine to which L12 dimers bind in a sequential fashion forming a multimeric L10(L12)X complex.

In terms of biological role, forms part of the ribosomal stalk, playing a central role in the interaction of the ribosome with GTP-bound translation factors. This is Large ribosomal subunit protein uL10 from Cytophaga hutchinsonii (strain ATCC 33406 / DSM 1761 / CIP 103989 / NBRC 15051 / NCIMB 9469 / D465).